A 165-amino-acid chain; its full sequence is Heme oxygenase (165 aa).

Belongs to the heme oxygenase family.

The catalysed reaction is heme b + 3 reduced [NADPH--hemoprotein reductase] + 3 O2 = biliverdin IXalpha + CO + Fe(2+) + 3 oxidized [NADPH--hemoprotein reductase] + 3 H2O + H(+). Catalyzes the opening of the heme ring to form the open-chain tetrapyrrole biliverdin IX with the release of iron and carbon monoxide (CO). This Xanthomonas campestris pv. campestris (strain 8004) protein is Heme oxygenase (bphO).